Consider the following 305-residue polypeptide: Superkiller complex protein 8 (305 aa).

WD repeat units follow at residues 14-57 (AHED…LELQ), 62-101 (GHQL…QIKS), 104-143 (AGPV…KEHS), 146-187 (TRGK…HTLE), 188-227 (GHAM…LAGT), 230-269 (GHGS…CVNT), and 272-305 (DHQD…DCPM).

This sequence belongs to the SKI8 family. As to quaternary structure, component of the PAF1 complex. Component of the SKI complex.

It is found in the nucleus. Its subcellular location is the cytoplasm. Component of the PAF1 complex (PAF1C) which has multiple functions during transcription by RNA polymerase II and is implicated in regulation of development and maintenance of embryonic stem cell pluripotency. PAF1C associates with RNA polymerase II through interaction with POLR2A CTD non-phosphorylated and 'Ser-2'- and 'Ser-5'-phosphorylated forms and is involved in transcriptional elongation, acting both independently and synergistically with TCEA1 and in cooperation with the DSIF complex and HTATSF1. Also acts as a component of the SKI complex, a multiprotein complex that assists the RNA-degrading exosome during the mRNA decay and quality-control pathways. The SKI complex catalyzes mRNA extraction from 80S ribosomal complexes in the 3'-5' direction and channels mRNA to the cytosolic exosome for degradation. This is Superkiller complex protein 8 (skic8) from Danio rerio (Zebrafish).